The chain runs to 159 residues: Ribosomal RNA large subunit methyltransferase H (159 aa).

S-adenosyl-L-methionine-binding positions include leucine 76, glycine 108, and 127-132 (FSKMTF).

The protein belongs to the RNA methyltransferase RlmH family. As to quaternary structure, homodimer.

The protein resides in the cytoplasm. It carries out the reaction pseudouridine(1915) in 23S rRNA + S-adenosyl-L-methionine = N(3)-methylpseudouridine(1915) in 23S rRNA + S-adenosyl-L-homocysteine + H(+). Functionally, specifically methylates the pseudouridine at position 1915 (m3Psi1915) in 23S rRNA. In Clostridium kluyveri (strain NBRC 12016), this protein is Ribosomal RNA large subunit methyltransferase H.